A 253-amino-acid polypeptide reads, in one-letter code: Trans-aconitate 2-methyltransferase (253 aa).

This sequence belongs to the methyltransferase superfamily. Tam family.

The protein localises to the cytoplasm. The enzyme catalyses trans-aconitate + S-adenosyl-L-methionine = (E)-3-(methoxycarbonyl)pent-2-enedioate + S-adenosyl-L-homocysteine. Catalyzes the S-adenosylmethionine monomethyl esterification of trans-aconitate. The polypeptide is Trans-aconitate 2-methyltransferase (Klebsiella pneumoniae (strain 342)).